The primary structure comprises 193 residues: dTTP/UTP pyrophosphatase (193 aa).

The active-site Proton acceptor is aspartate 68.

This sequence belongs to the Maf family. YhdE subfamily. A divalent metal cation serves as cofactor.

It localises to the cytoplasm. The catalysed reaction is dTTP + H2O = dTMP + diphosphate + H(+). It catalyses the reaction UTP + H2O = UMP + diphosphate + H(+). Nucleoside triphosphate pyrophosphatase that hydrolyzes dTTP and UTP. May have a dual role in cell division arrest and in preventing the incorporation of modified nucleotides into cellular nucleic acids. The polypeptide is dTTP/UTP pyrophosphatase (Ruegeria sp. (strain TM1040) (Silicibacter sp.)).